A 274-amino-acid chain; its full sequence is Large ribosomal subunit protein uL2 (274 aa).

Disordered stretches follow at residues 34-53 and 216-274; these read IAPI…TMRY and RRPR…RRKK.

It belongs to the universal ribosomal protein uL2 family. As to quaternary structure, part of the 50S ribosomal subunit. Forms a bridge to the 30S subunit in the 70S ribosome.

Its function is as follows. One of the primary rRNA binding proteins. Required for association of the 30S and 50S subunits to form the 70S ribosome, for tRNA binding and peptide bond formation. It has been suggested to have peptidyltransferase activity; this is somewhat controversial. Makes several contacts with the 16S rRNA in the 70S ribosome. The protein is Large ribosomal subunit protein uL2 of Flavobacterium psychrophilum (strain ATCC 49511 / DSM 21280 / CIP 103535 / JIP02/86).